The primary structure comprises 210 residues: tRNA (guanine-N(7)-)-methyltransferase (210 aa).

S-adenosyl-L-methionine-binding residues include Glu43, Glu68, Asp95, and Asp117. Asp117 is an active-site residue. Substrate is bound by residues Lys121, Asp153, and 190-193 (TEYE).

The protein belongs to the class I-like SAM-binding methyltransferase superfamily. TrmB family.

It catalyses the reaction guanosine(46) in tRNA + S-adenosyl-L-methionine = N(7)-methylguanosine(46) in tRNA + S-adenosyl-L-homocysteine. Its pathway is tRNA modification; N(7)-methylguanine-tRNA biosynthesis. In terms of biological role, catalyzes the formation of N(7)-methylguanine at position 46 (m7G46) in tRNA. This is tRNA (guanine-N(7)-)-methyltransferase from Macrococcus caseolyticus (strain JCSC5402) (Macrococcoides caseolyticum).